Reading from the N-terminus, the 762-residue chain is 5-methyltetrahydropteroyltriglutamate--homocysteine methyltransferase (762 aa).

Residues 17–20 (REWK) and K111 each bind 5-methyltetrahydropteroyltri-L-glutamate. L-homocysteine is bound by residues 435–437 (IGS) and E488. L-methionine contacts are provided by residues 435–437 (IGS) and E488. 5-methyltetrahydropteroyltri-L-glutamate contacts are provided by residues 519–520 (RC) and W565. D603 lines the L-homocysteine pocket. D603 lines the L-methionine pocket. Position 609 (E609) interacts with 5-methyltetrahydropteroyltri-L-glutamate. The Zn(2+) site is built by H645, C647, and E669. The active-site Proton donor is the H698. C730 provides a ligand contact to Zn(2+).

Belongs to the vitamin-B12 independent methionine synthase family. Requires Zn(2+) as cofactor.

The enzyme catalyses 5-methyltetrahydropteroyltri-L-glutamate + L-homocysteine = tetrahydropteroyltri-L-glutamate + L-methionine. It participates in amino-acid biosynthesis; L-methionine biosynthesis via de novo pathway; L-methionine from L-homocysteine (MetE route): step 1/1. Functionally, catalyzes the transfer of a methyl group from 5-methyltetrahydrofolate to homocysteine resulting in methionine formation. This chain is 5-methyltetrahydropteroyltriglutamate--homocysteine methyltransferase, found in Bacillus anthracis (strain CDC 684 / NRRL 3495).